Here is a 551-residue protein sequence, read N- to C-terminus: mRNA cap guanine-N(7) methyltransferase (551 aa).

A compositionally biased stretch (polar residues) spans 1–10; sequence MENRSSSGTP. Positions 1-152 are disordered; it reads MENRSSSGTP…DRETLRRRQE (152 aa). Composition is skewed to basic and acidic residues over residues 48 to 76 and 141 to 152; these read VTEE…EERH and LVDRETLRRRQE. Positions 194 to 551 constitute an mRNA cap 0 methyltransferase domain; it reads SKIKGLRSFN…FYHAFCFYKV (358 aa). An mRNA-binding site is contributed by 203–204; it reads NN. S-adenosyl-L-methionine is bound by residues lysine 207, glycine 250, aspartate 274, aspartate 312, 355 to 357, and tyrosine 360; that span reads MFA. The segment at 407 to 430 is disordered; that stretch reads KAREEQEKKEKSDEAPEDGEVEED. Residues 408-420 show a composition bias toward basic and acidic residues; the sequence is AREEQEKKEKSDE. Residues 421 to 430 show a composition bias toward acidic residues; it reads APEDGEVEED.

Belongs to the class I-like SAM-binding methyltransferase superfamily. mRNA cap 0 methyltransferase family.

It localises to the nucleus. It catalyses the reaction a 5'-end (5'-triphosphoguanosine)-ribonucleoside in mRNA + S-adenosyl-L-methionine = a 5'-end (N(7)-methyl 5'-triphosphoguanosine)-ribonucleoside in mRNA + S-adenosyl-L-homocysteine. Functionally, responsible for methylating the 5'-cap structure of mRNAs. The polypeptide is mRNA cap guanine-N(7) methyltransferase (abd1) (Aspergillus clavatus (strain ATCC 1007 / CBS 513.65 / DSM 816 / NCTC 3887 / NRRL 1 / QM 1276 / 107)).